A 484-amino-acid polypeptide reads, in one-letter code: Malonate-semialdehyde dehydrogenase 2 (484 aa).

The NAD(+) site is built by Phe153, Lys177, Glu180, Arg181, Ser230, and Thr252. Cys285 functions as the Nucleophile in the catalytic mechanism. NAD(+) is bound at residue Glu385.

Belongs to the aldehyde dehydrogenase family. IolA subfamily. In terms of assembly, homotetramer.

It carries out the reaction 3-oxopropanoate + NAD(+) + CoA + H2O = hydrogencarbonate + acetyl-CoA + NADH + H(+). It catalyses the reaction 2-methyl-3-oxopropanoate + NAD(+) + CoA + H2O = propanoyl-CoA + hydrogencarbonate + NADH + H(+). It functions in the pathway polyol metabolism; myo-inositol degradation into acetyl-CoA; acetyl-CoA from myo-inositol: step 7/7. Its function is as follows. Catalyzes the oxidation of malonate semialdehyde (MSA) and methylmalonate semialdehyde (MMSA) into acetyl-CoA and propanoyl-CoA, respectively. Is involved in a myo-inositol catabolic pathway. Bicarbonate, and not CO2, is the end-product of the enzymatic reaction. This Geobacillus kaustophilus (strain HTA426) protein is Malonate-semialdehyde dehydrogenase 2.